A 72-amino-acid chain; its full sequence is Translation initiation factor IF-1 (72 aa).

The S1-like domain maps to 1 to 72 (MAKEEAIEVE…TRGRITYREK (72 aa)).

It belongs to the IF-1 family. In terms of assembly, component of the 30S ribosomal translation pre-initiation complex which assembles on the 30S ribosome in the order IF-2 and IF-3, IF-1 and N-formylmethionyl-tRNA(fMet); mRNA recruitment can occur at any time during PIC assembly.

Its subcellular location is the cytoplasm. Functionally, one of the essential components for the initiation of protein synthesis. Stabilizes the binding of IF-2 and IF-3 on the 30S subunit to which N-formylmethionyl-tRNA(fMet) subsequently binds. Helps modulate mRNA selection, yielding the 30S pre-initiation complex (PIC). Upon addition of the 50S ribosomal subunit IF-1, IF-2 and IF-3 are released leaving the mature 70S translation initiation complex. The protein is Translation initiation factor IF-1 of Syntrophotalea carbinolica (strain DSM 2380 / NBRC 103641 / GraBd1) (Pelobacter carbinolicus).